The sequence spans 283 residues: Pantothenate synthetase (283 aa).

26–33 (MGNLHEGH) is a binding site for ATP. The Proton donor role is filled by His-33. Gln-57 lines the (R)-pantoate pocket. Gln-57 contacts beta-alanine. 144-147 (GKKD) is an ATP binding site. Gln-150 is a binding site for (R)-pantoate. ATP-binding positions include Val-173 and 181-184 (LSSR).

Belongs to the pantothenate synthetase family. Homodimer.

Its subcellular location is the cytoplasm. It carries out the reaction (R)-pantoate + beta-alanine + ATP = (R)-pantothenate + AMP + diphosphate + H(+). The protein operates within cofactor biosynthesis; (R)-pantothenate biosynthesis; (R)-pantothenate from (R)-pantoate and beta-alanine: step 1/1. Functionally, catalyzes the condensation of pantoate with beta-alanine in an ATP-dependent reaction via a pantoyl-adenylate intermediate. This chain is Pantothenate synthetase, found in Ralstonia pickettii (strain 12J).